The primary structure comprises 323 residues: MIEFGNFYQLIAKNHLSHWLETLPAQIASWQREQQHGLFKQWSNAVEFLPEMTPWRLDLLHSVTAESETPLSEGQLKRIDTLLRNLMPWRKGPFSLYGVDIDTEWRSDWKWDRVLPHLSDLTGRTILDVGCGSGYHLWRMIGAGAHLAVGIDPTQLFLCQFEAVRKLLGNDQRAHLLPLGIEQLPALKAFDTVFSMGVLYHRRSPLEHLWQLKDQLVNEGELVLETLVIDGDENTVLVPGDRYAQMRNVYFIPSAPALKKWLEKCGFIDVRIADVCVTTTEEQRRTEWMVTESLADFLDPNDRSKTVEGYPAPQRAVLIARKP.

Residues K91, W105, K110, G130, 152–154, 181–182, M196, Y200, and R315 contribute to the carboxy-S-adenosyl-L-methionine site; these read DPT and IE.

The protein belongs to the class I-like SAM-binding methyltransferase superfamily. CmoB family. In terms of assembly, homotetramer.

It carries out the reaction carboxy-S-adenosyl-L-methionine + 5-hydroxyuridine(34) in tRNA = 5-carboxymethoxyuridine(34) in tRNA + S-adenosyl-L-homocysteine + H(+). Its function is as follows. Catalyzes carboxymethyl transfer from carboxy-S-adenosyl-L-methionine (Cx-SAM) to 5-hydroxyuridine (ho5U) to form 5-carboxymethoxyuridine (cmo5U) at position 34 in tRNAs. The protein is tRNA U34 carboxymethyltransferase of Salmonella typhimurium (strain LT2 / SGSC1412 / ATCC 700720).